A 431-amino-acid polypeptide reads, in one-letter code: Serine/threonine-protein kinase Sgk1 (431 aa).

Positions 1 to 60 (MTVKTEAAKGTLTYSRMRGMVAILIAFMKQRRMGLNDFIQKIANNSYACKHPEVQSILKI) are necessary for localization to the mitochondria. Residues 66–92 (PELMNANPSPPPSPSQQINLGPSSNPH) form a disordered region. A Phosphoserine modification is found at serine 74. Serine 78 carries the phosphoserine; by MAPK7 modification. Polar residues predominate over residues 81-91 (QQINLGPSSNP). The Protein kinase domain maps to 98 to 355 (FHFLKVIGKG…FMEIKSHVFF (258 aa)). ATP-binding positions include 104–112 (IGKGSFGKV) and lysine 127. The Nuclear localization signal motif lies at 131–141 (KKAILKKKEEK). Aspartate 222 (proton acceptor) is an active-site residue. At threonine 256 the chain carries Phosphothreonine; by PDPK1. Positions 356-431 (SLINWDDLIN…SYAPPTDSFL (76 aa)) constitute an AGC-kinase C-terminal domain. Threonine 369 bears the Phosphothreonine; by PKA mark. Phosphoserine occurs at positions 397, 401, and 422.

This sequence belongs to the protein kinase superfamily. AGC Ser/Thr protein kinase family. Homodimer; disulfide-linked. Forms a trimeric complex with FBXW7 and NOTCH1. Interacts with MAPK3/ERK1, MAPK1/ERK2, MAP2K1/MEK1, MAP2K2/MEK2, NEDD4, NEDD4L, MAPT/TAU, MAPK7, CREB1, SLC9A3R2/NHERF2 and KCNJ1/ROMK1. Associates with the mammalian target of rapamycin complex 2 (mTORC2) via an interaction with MAPKAP1/SIN1. In terms of processing, regulated by phosphorylation. Activated by phosphorylation on Ser-422 by mTORC2, transforming it into a substrate for PDPK1 which phosphorylates it on Thr-256. Phosphorylation on Ser-397 and Ser-401 are also essential for its activity. Phosphorylation on Ser-78 by MAPK7 is required for growth factor-induced cell cycle progression. Post-translationally, ubiquitinated by NEDD4L; which promotes proteasomal degradation. Ubiquitinated by SYVN1 at the endoplasmic reticulum; which promotes rapid proteasomal degradation and maintains a high turnover rate in resting cells. Isoform 2 shows enhanced stability. In terms of tissue distribution, expressed in most tissues with highest levels in the pancreas, followed by placenta, kidney and lung. Isoform 2 is strongly expressed in brain and pancreas, weaker in heart, placenta, lung, liver and skeletal muscle.

The protein resides in the cytoplasm. Its subcellular location is the nucleus. It localises to the endoplasmic reticulum membrane. The protein localises to the cell membrane. It is found in the mitochondrion. The enzyme catalyses L-seryl-[protein] + ATP = O-phospho-L-seryl-[protein] + ADP + H(+). It carries out the reaction L-threonyl-[protein] + ATP = O-phospho-L-threonyl-[protein] + ADP + H(+). Two specific sites, one in the kinase domain (Thr-256) and the other in the C-terminal regulatory region (Ser-422), need to be phosphorylated for its full activation. Phosphorylation at Ser-397 and Ser-401 are also essential for its activity. Activated by WNK1, WNK2, WNK3 and WNK4; which promote phosphorylation by mTORC2. Functionally, serine/threonine-protein kinase which is involved in the regulation of a wide variety of ion channels, membrane transporters, cellular enzymes, transcription factors, neuronal excitability, cell growth, proliferation, survival, migration and apoptosis. Plays an important role in cellular stress response. Contributes to regulation of renal Na(+) retention, renal K(+) elimination, salt appetite, gastric acid secretion, intestinal Na(+)/H(+) exchange and nutrient transport, insulin-dependent salt sensitivity of blood pressure, salt sensitivity of peripheral glucose uptake, cardiac repolarization and memory consolidation. Up-regulates Na(+) channels: SCNN1A/ENAC, SCN5A and ASIC1/ACCN2, K(+) channels: KCNJ1/ROMK1, KCNA1-5, KCNQ1-5 and KCNE1, epithelial Ca(2+) channels: TRPV5 and TRPV6, chloride channels: BSND, CLCN2 and CFTR, glutamate transporters: SLC1A3/EAAT1, SLC1A2 /EAAT2, SLC1A1/EAAT3, SLC1A6/EAAT4 and SLC1A7/EAAT5, amino acid transporters: SLC1A5/ASCT2, SLC38A1/SN1 and SLC6A19, creatine transporter: SLC6A8, Na(+)/dicarboxylate cotransporter: SLC13A2/NADC1, Na(+)-dependent phosphate cotransporter: SLC34A2/NAPI-2B, glutamate receptor: GRIK2/GLUR6. Up-regulates carriers: SLC9A3/NHE3, SLC12A1/NKCC2, SLC12A3/NCC, SLC5A3/SMIT, SLC2A1/GLUT1, SLC5A1/SGLT1 and SLC15A2/PEPT2. Regulates enzymes: GSK3A/B, PMM2 and Na(+)/K(+) ATPase, and transcription factors: CTNNB1 and nuclear factor NF-kappa-B. Stimulates sodium transport into epithelial cells by enhancing the stability and expression of SCNN1A/ENAC. This is achieved by phosphorylating the NEDD4L ubiquitin E3 ligase, promoting its interaction with 14-3-3 proteins, thereby preventing it from binding to SCNN1A/ENAC and targeting it for degradation. Regulates store-operated Ca(+2) entry (SOCE) by stimulating ORAI1 and STIM1. Regulates KCNJ1/ROMK1 directly via its phosphorylation or indirectly via increased interaction with SLC9A3R2/NHERF2. Phosphorylates MDM2 and activates MDM2-dependent ubiquitination of p53/TP53. Phosphorylates MAPT/TAU and mediates microtubule depolymerization and neurite formation in hippocampal neurons. Phosphorylates SLC2A4/GLUT4 and up-regulates its activity. Phosphorylates APBB1/FE65 and promotes its localization to the nucleus. Phosphorylates MAPK1/ERK2 and activates it by enhancing its interaction with MAP2K1/MEK1 and MAP2K2/MEK2. Phosphorylates FBXW7 and plays an inhibitory role in the NOTCH1 signaling. Phosphorylates FOXO1 resulting in its relocalization from the nucleus to the cytoplasm. Phosphorylates FOXO3, promoting its exit from the nucleus and interference with FOXO3-dependent transcription. Phosphorylates BRAF and MAP3K3/MEKK3 and inhibits their activity. Phosphorylates SLC9A3/NHE3 in response to dexamethasone, resulting in its activation and increased localization at the cell membrane. Phosphorylates CREB1. Necessary for vascular remodeling during angiogenesis. Sustained high levels and activity may contribute to conditions such as hypertension and diabetic nephropathy. Isoform 2 exhibited a greater effect on cell plasma membrane expression of SCNN1A/ENAC and Na(+) transport than isoform 1. This is Serine/threonine-protein kinase Sgk1 (SGK1) from Homo sapiens (Human).